A 91-amino-acid polypeptide reads, in one-letter code: Small ribosomal subunit protein bS20 (91 aa).

A compositionally biased stretch (basic and acidic residues) spans 1-18 (MPLHKSAEKRLRQSDRKN). Positions 1–25 (MPLHKSAEKRLRQSDRKNARNRARK) are disordered.

This sequence belongs to the bacterial ribosomal protein bS20 family.

Binds directly to 16S ribosomal RNA. The sequence is that of Small ribosomal subunit protein bS20 from Chlorobium phaeovibrioides (strain DSM 265 / 1930) (Prosthecochloris vibrioformis (strain DSM 265)).